Here is a 78-residue protein sequence, read N- to C-terminus: Probable Fe(2+)-trafficking protein (78 aa).

This sequence belongs to the Fe(2+)-trafficking protein family. As to quaternary structure, monomer.

Its function is as follows. Could be a mediator in iron transactions between iron acquisition and iron-requiring processes, such as synthesis and/or repair of Fe-S clusters in biosynthetic enzymes. The chain is Probable Fe(2+)-trafficking protein from Buchnera aphidicola subsp. Schizaphis graminum (strain Sg).